The following is a 199-amino-acid chain: MEFSFPLPGNPIFDYVLLPCFIFLSRVTDVSIGTIRVILLTREKKGIAASLGFLEVLLWVVVITQVIKNLNNVFCYLAYAGGFATGTFIGMILEEKLAIGFSLLRIISPQNGSEIADKLSEAGYRVTIMNGHGSRGPVKIVFTVLKRKKIDQAMKIVQNVEPDVFYSIENARRTNTTTFEDSPGLLRRGILEKILKIRK.

2 consecutive transmembrane segments (helical) span residues 47 to 67 (IAAS…TQVI) and 73 to 93 (VFCY…GMIL).

Belongs to the UPF0316 family.

The protein localises to the cell membrane. In Leptospira interrogans serogroup Icterohaemorrhagiae serovar Lai (strain 56601), this protein is UPF0316 protein LA_0606.